Reading from the N-terminus, the 264-residue chain is MSQTKDFVLYGEHFNSRFLLGTALYASPQLMRDSIEKSRCDIVTLGLRRQNPANRDGDTFWQYIQDSGCRLLPNTAGCKSVKEAVTLAEMSREIFDTDWIKLEVVGDDYNLQPDPFGLVEAAGILIKQGFKVLPYCTDDLILCKRLLDVGCQVLMPWGAPIGTGQGLLNRYNLRSLRERIKDVPMIIDAGLGAPSQAAEAMEMGYDGILLNTAVAKAHNPPLMAEAFADAIDAGRKAYNAGLMQKRQTASPSTPTLGQPFWHNQ.

Catalysis depends on K101, which acts as the Schiff-base intermediate with DXP. Residues G162, 189-190 (AG), and 211-212 (NT) contribute to the 1-deoxy-D-xylulose 5-phosphate site. Residues 245-264 (KRQTASPSTPTLGQPFWHNQ) are disordered.

It belongs to the ThiG family. As to quaternary structure, homotetramer. Forms heterodimers with either ThiH or ThiS.

Its subcellular location is the cytoplasm. It carries out the reaction [ThiS sulfur-carrier protein]-C-terminal-Gly-aminoethanethioate + 2-iminoacetate + 1-deoxy-D-xylulose 5-phosphate = [ThiS sulfur-carrier protein]-C-terminal Gly-Gly + 2-[(2R,5Z)-2-carboxy-4-methylthiazol-5(2H)-ylidene]ethyl phosphate + 2 H2O + H(+). It functions in the pathway cofactor biosynthesis; thiamine diphosphate biosynthesis. In terms of biological role, catalyzes the rearrangement of 1-deoxy-D-xylulose 5-phosphate (DXP) to produce the thiazole phosphate moiety of thiamine. Sulfur is provided by the thiocarboxylate moiety of the carrier protein ThiS. In vitro, sulfur can be provided by H(2)S. The polypeptide is Thiazole synthase (Cellvibrio japonicus (strain Ueda107) (Pseudomonas fluorescens subsp. cellulosa)).